Here is a 171-residue protein sequence, read N- to C-terminus: MDKKSLYKYLLLRSTGDMHRAKSPTIMTRVTNNVYLGNYKNAMDAPSSEVKFKYVLNLTMDKYTLPNSNINIIHIPLVDDTTTDISKYFDDVTAFLSKCDQRNEPVLVHCVAGVNRSGAMILAYLMSKNKESSPMLYFLYVYHSMRDLRGAFVENPSFKRQIIEKYVIDKN.

It belongs to the protein-tyrosine phosphatase family. Non-receptor class dual specificity subfamily. As to quaternary structure, homodimer.

The protein localises to the virion. The protein resides in the host cytoplasm. It carries out the reaction O-phospho-L-tyrosyl-[protein] + H2O = L-tyrosyl-[protein] + phosphate. The enzyme catalyses O-phospho-L-seryl-[protein] + H2O = L-seryl-[protein] + phosphate. In terms of biological role, serine/tyrosine phosphatase which down-regulates cellular antiviral response by dephosphorylating activated host STAT1 and blocking interferon (IFN)-stimulated innate immune responses. Dephosphorylates the OPG144 protein. This Monkeypox virus protein is Dual specificity protein phosphatase OPG106 (OPG106).